The chain runs to 58 residues: Large ribosomal subunit protein bL32 (58 aa).

Over residues 1–15 (MAVPKKKTSKAKRNQ) the composition is skewed to basic residues. Residues 1-23 (MAVPKKKTSKAKRNQRSATWKGK) are disordered.

It belongs to the bacterial ribosomal protein bL32 family.

This is Large ribosomal subunit protein bL32 from Parasynechococcus marenigrum (strain WH8102).